The primary structure comprises 323 residues: Methionyl-tRNA formyltransferase (323 aa).

113 to 116 (SLLP) contributes to the (6S)-5,6,7,8-tetrahydrofolate binding site.

It belongs to the Fmt family.

It carries out the reaction L-methionyl-tRNA(fMet) + (6R)-10-formyltetrahydrofolate = N-formyl-L-methionyl-tRNA(fMet) + (6S)-5,6,7,8-tetrahydrofolate + H(+). Functionally, attaches a formyl group to the free amino group of methionyl-tRNA(fMet). The formyl group appears to play a dual role in the initiator identity of N-formylmethionyl-tRNA by promoting its recognition by IF2 and preventing the misappropriation of this tRNA by the elongation apparatus. In Nitrosococcus oceani (strain ATCC 19707 / BCRC 17464 / JCM 30415 / NCIMB 11848 / C-107), this protein is Methionyl-tRNA formyltransferase.